The primary structure comprises 526 residues: Probable carboxypeptidase 2 (526 aa).

Residues 1–21 (MVAYRLLALISLGLGSHCASA) form the signal peptide. Residue asparagine 46 is glycosylated (N-linked (GlcNAc...) asparagine). Residues 53 to 76 (PAFTSPGTVPRGFSDGTSGPTRDE) form a disordered region. Residues 71-351 (GPTRDETMEG…VMAKSILQTA (281 aa)) form the Peptidase M14 domain. An N-linked (GlcNAc...) asparagine glycan is attached at asparagine 116. Residues histidine 136, glutamate 139, and histidine 224 each contribute to the Zn(2+) site. Glutamate 322 acts as the Proton donor/acceptor in catalysis. N-linked (GlcNAc...) asparagine glycosylation is found at asparagine 393 and asparagine 459.

The protein belongs to the peptidase M14 family. It depends on Zn(2+) as a cofactor.

Its subcellular location is the secreted. In terms of biological role, extracellular metalloprotease that contributes to pathogenicity. The chain is Probable carboxypeptidase 2 (MCPB) from Arthroderma benhamiae (strain ATCC MYA-4681 / CBS 112371) (Trichophyton mentagrophytes).